The following is a 594-amino-acid chain: Membrane protein insertase YidC (594 aa).

A helical membrane pass occupies residues 7-27 (YFVAIALSVLILIAWQFFYVS). The segment at 36–73 (AAEQAQQAQQTQQQPGAQPAAPGQALPGGAIPSAGESR) is disordered. The segment covering 37–65 (AEQAQQAQQTQQQPGAQPAAPGQALPGGA) has biased composition (low complexity). 4 helical membrane-spanning segments follow: residues 369–389 (LFGN…LIFF), 443–463 (WPIL…YVTI), 488–508 (LFGL…WPII), and 532–552 (FTWM…GLVI).

It belongs to the OXA1/ALB3/YidC family. Type 1 subfamily. As to quaternary structure, interacts with the Sec translocase complex via SecD. Specifically interacts with transmembrane segments of nascent integral membrane proteins during membrane integration.

The protein localises to the cell inner membrane. In terms of biological role, required for the insertion and/or proper folding and/or complex formation of integral membrane proteins into the membrane. Involved in integration of membrane proteins that insert both dependently and independently of the Sec translocase complex, as well as at least some lipoproteins. Aids folding of multispanning membrane proteins. The protein is Membrane protein insertase YidC of Rhizobium meliloti (strain 1021) (Ensifer meliloti).